Consider the following 392-residue polypeptide: uncharacterized protein (392 aa).

Belongs to the chlamydial CPn_0675/CT_696/TC_0068 family.

This is an uncharacterized protein from Chlamydia trachomatis serovar D (strain ATCC VR-885 / DSM 19411 / UW-3/Cx).